Reading from the N-terminus, the 173-residue chain is Lens fiber membrane intrinsic protein (173 aa).

The Cytoplasmic segment spans residues 1–3 (MYS). Residues 4–24 (FMGGGLFCAWVGTILLVVAMA) form a helical membrane-spanning segment. Residues 25–66 (TDHWMQYRLSGSFAHQGLWRYCLGNKCYLQTDSIAYWNATRA) are Extracellular-facing. C-linked (Man) tryptophan glycosylation is found at W43 and W61. An N-linked (GlcNAc...) asparagine glycan is attached at N62. A helical transmembrane segment spans residues 67–87 (FMILSALCAISGIIMGIMAFA). Over 88 to 98 (HQPTFSRISRP) the chain is Cytoplasmic. The chain crosses the membrane as a helical span at residues 99–119 (FSAGIMFFSSTLFVVLALAIY). Topologically, residues 120 to 140 (TGVTVSFLGRRFGDWRFSWSY) are extracellular. A helical transmembrane segment spans residues 141–161 (ILGWVAVLMTFFAGIFYMCAY). Residues 162–173 (RVHECRRLSTPR) are Cytoplasmic-facing. S170 carries the post-translational modification Phosphoserine. T171 carries the phosphothreonine modification.

The protein belongs to the PMP-22/EMP/MP20 family. In terms of assembly, seems to be associated with itself or another lens membrane component via disulfide bonds. As to expression, eye lens specific.

It is found in the membrane. Functionally, present in the thicker 16-17 nm junctions of mammalian lens fiber cells, where it may contribute to cell junctional organization. Acts as a receptor for calmodulin. May play an important role in both lens development and cataractogenesis. This Homo sapiens (Human) protein is Lens fiber membrane intrinsic protein (LIM2).